The sequence spans 224 residues: Oxaloacetate tautomerase FAHD2, mitochondrial (224 aa).

The N-terminal 30 residues, 1-30, are a transit peptide targeting the mitochondrion; the sequence is MATSMIQRLFKQGTKIVGVGLNYASHAKEL. Mg(2+) is bound by residues Glu67, Glu69, and Asp98.

The protein belongs to the FAH family. It depends on Mg(2+) as a cofactor. The cofactor is Mn(2+).

The protein localises to the mitochondrion. The enzyme catalyses oxaloacetate = enol-oxaloacetate. Functionally, tautomerase that converts enol-oxaloacetate, a strong inhibitor of succinate dehydrogenase, to the physiological keto form of oxaloacetate. The sequence is that of Oxaloacetate tautomerase FAHD2, mitochondrial from Arabidopsis thaliana (Mouse-ear cress).